Here is a 103-residue protein sequence, read N- to C-terminus: Large ribosomal subunit protein bL21 (103 aa).

Belongs to the bacterial ribosomal protein bL21 family. Part of the 50S ribosomal subunit. Contacts protein L20.

This protein binds to 23S rRNA in the presence of protein L20. The sequence is that of Large ribosomal subunit protein bL21 from Pseudomonas aeruginosa (strain LESB58).